The sequence spans 185 residues: Capsid protein (185 aa).

Positions 135–185 (PNAPILSTLPETTVVRRRDRGRSPRRRTPSPRRRRSQSPRRRRSQSRESQC) are disordered. Basic residues predominate over residues 149–178 (VRRRDRGRSPRRRTPSPRRRRSQSPRRRRS). Phosphoserine; by host is present on residues serine 157, serine 164, and serine 172. Residues 157 to 163 (SPRRRTP) form a 1; half-length repeat. The tract at residues 157–179 (SPRRRTPSPRRRRSQSPRRRRSQ) is 3 X 8 AA repeats of S-P-R-R-R-[PR]-S-Q. The short motif at 160–177 (RRTPSPRRRRSQSPRRRR) is the Bipartite nuclear localization signal element. A run of 2 repeats spans residues 164-171 (SPRRRRSQ) and 172-179 (SPRRRRSQ). Residues 179–185 (QSRESQC) form an RNA binding region.

This sequence belongs to the orthohepadnavirus core antigen family. In terms of assembly, homodimerizes, then multimerizes. Interacts with cytosol exposed regions of viral L glycoprotein present in the reticulum-to-Golgi compartment. Interacts with human FLNB. Phosphorylated form interacts with host importin alpha; this interaction depends on the exposure of the NLS, which itself depends upon genome maturation and/or phosphorylation of the capsid protein. Interacts with host NUP153. Post-translationally, phosphorylated by host SRPK1, SRPK2, and maybe protein kinase C or GAPDH. Phosphorylation is critical for pregenomic RNA packaging. Protein kinase C phosphorylation is stimulated by HBx protein and may play a role in transport of the viral genome to the nucleus at the late step during the viral replication cycle.

It is found in the virion. Its subcellular location is the host cytoplasm. Functionally, self assembles to form an icosahedral capsid. Most capsids appear to be large particles with an icosahedral symmetry of T=4 and consist of 240 copies of capsid protein, though a fraction forms smaller T=3 particles consisting of 180 capsid proteins. Entering capsids are transported along microtubules to the nucleus. Phosphorylation of the capsid is thought to induce exposure of nuclear localization signal in the C-terminal portion of the capsid protein that allows binding to the nuclear pore complex via the importin (karyopherin-) alpha and beta. Capsids are imported in intact form through the nuclear pore into the nuclear basket, where it probably binds NUP153. Only capsids that contain the mature viral genome can release the viral DNA and capsid protein into the nucleoplasm. Immature capsids get stuck in the basket. Capsids encapsulate the pre-genomic RNA and the P protein. Pre-genomic RNA is reverse-transcribed into DNA while the capsid is still in the cytoplasm. The capsid can then either be directed to the nucleus, providing more genomes for transcription, or bud through the endoplasmic reticulum to provide new virions. This is Capsid protein from Hepatitis B virus genotype A3 (isolate Cameroon/CMR711/1994) (HBV-A).